A 159-amino-acid chain; its full sequence is MRKPYRKVVVGGTFDRLHLGHKALLRKAFEVGRYVYVGLTSDEMIRNKPYAEKILPYELRLMDLLKFFEVNGYTNYRIIKINTAIGFADRIKSLEAIVVSEETYKGALLVNRAREERGLKPLEIVTIKLVKSRIGPKISSTLIRAGLIDPFGNPLKKDN.

It belongs to the eukaryotic CoaD family.

The protein resides in the cytoplasm. It catalyses the reaction (R)-4'-phosphopantetheine + ATP + H(+) = 3'-dephospho-CoA + diphosphate. It participates in cofactor biosynthesis; coenzyme A biosynthesis. Reversibly transfers an adenylyl group from ATP to 4'-phosphopantetheine, yielding dephospho-CoA (dPCoA) and pyrophosphate. In Thermococcus gammatolerans (strain DSM 15229 / JCM 11827 / EJ3), this protein is Phosphopantetheine adenylyltransferase.